Consider the following 324-residue polypeptide: MATH domain and coiled-coil domain-containing protein At3g44790 (324 aa).

The 123-residue stretch at 3 to 125 (YEKFTWVIKN…NNEVKIVVEV (123 aa)) folds into the MATH domain. Positions 241-309 (FKVDWLERKL…ALLEKEKAKS (69 aa)) form a coiled coil.

The polypeptide is MATH domain and coiled-coil domain-containing protein At3g44790 (Arabidopsis thaliana (Mouse-ear cress)).